The chain runs to 393 residues: GDSL esterase/lipase At1g28600 (393 aa).

The first 22 residues, 1–22 (MASLDSLVIFLFSTLFVTIVSS), serve as a signal peptide directing secretion. Catalysis depends on Ser-38, which acts as the Nucleophile. N-linked (GlcNAc...) asparagine glycosylation is found at Asn-133 and Asn-317. Catalysis depends on residues Asp-340 and His-343. The N-linked (GlcNAc...) asparagine glycan is linked to Asn-382.

The protein belongs to the 'GDSL' lipolytic enzyme family.

It is found in the secreted. The sequence is that of GDSL esterase/lipase At1g28600 from Arabidopsis thaliana (Mouse-ear cress).